The following is a 360-amino-acid chain: MSTSKAITLTLFITTTLLASCDAAANATTKPLFPAILIFGDSTVDTGNNNYPLPTIFRAEHFPYGMDLPDGKANGRFSNGKLISDIIATKLNIKEFIPPFLQPNLSDQDILTGVCFASAGAGYDDLTSLSTQAIRVSEQPNMFKSYIARLKGIVGDKKAMEIINNAFVVVSAGPNDFILNYYDIPSRRLEYPFISGYQDFILKRLENFVRELYSLGVRNVLVGGLPPMGCLPIHMTAKFRNIFRFCLEHHNKDSVLYNEKLQKLLPQIEASLPGSKFLYADVYNPMMEMIQNPSKYGFKETKRGCCGTGFLETSFMCNVFSPVCQNRSEFMFFDSIHPSEATYNVIGNRLDPLIRGKFQA.

A signal peptide spans 1–27 (MSTSKAITLTLFITTTLLASCDAAANA). A glycan (N-linked (GlcNAc...) asparagine) is linked at Asn26. The active-site Nucleophile is the Ser42. N-linked (GlcNAc...) asparagine glycosylation is found at Asn104 and Asn326. Catalysis depends on residues Asp334 and His337.

Belongs to the 'GDSL' lipolytic enzyme family.

The protein resides in the secreted. The sequence is that of GDSL esterase/lipase At2g31550 from Arabidopsis thaliana (Mouse-ear cress).